The chain runs to 240 residues: RNA-binding protein pno1 (240 aa).

The span at 1 to 15 (MEAENIRADAFEPAK) shows a compositional bias: basic and acidic residues. A disordered region spans residues 1 to 61 (MEAENIRADA…APPKAKRARS (61 aa)). Positions 164-213 (QSRAIGRLAGKGGRTKFTIENVTKTRIVLADSKIHILGSYQNIQLARRAV) constitute a KH domain.

Belongs to the PNO1 family.

It localises to the nucleus. Its subcellular location is the nucleolus. The protein is RNA-binding protein pno1 (l(1)G0004) of Drosophila melanogaster (Fruit fly).